An 892-amino-acid chain; its full sequence is Exo-beta-D-glucosaminidase (892 aa).

Positions 1-18 (MLANAIAALLLGSGIASA) are cleaved as a signal peptide. A propeptide spanning residues 19–28 (AGHGSPLTSK) is cleaved from the precursor. N-linked (GlcNAc...) asparagine glycosylation is found at asparagine 196, asparagine 336, and asparagine 440. The Proton donor role is filled by aspartate 464. Glutamate 539 (nucleophile) is an active-site residue. Residues asparagine 557, asparagine 578, asparagine 689, and asparagine 825 are each glycosylated (N-linked (GlcNAc...) asparagine).

The protein belongs to the glycosyl hydrolase 2 family. In terms of assembly, monomer.

The protein localises to the secreted. The protein resides in the extracellular space. The catalysed reaction is Hydrolysis of chitosan or chitosan oligosaccharides to remove successive D-glucosamine residues from the non-reducing termini.. Hydrolyzes chitosan and chitooligosaccharides with retention of anomeric configuration. Has no activity against beta-D-galactoside, beta-D-glucuronide, beta-D-mannoside, chitin, glycol chitosan, cellulose, N,N'-diacetylchitibiose and pNP-GlcNAc. The polypeptide is Exo-beta-D-glucosaminidase (Hypocrea jecorina (Trichoderma reesei)).